Consider the following 100-residue polypeptide: Urease subunit gamma (100 aa).

Belongs to the urease gamma subunit family. As to quaternary structure, heterotrimer of UreA (gamma), UreB (beta) and UreC (alpha) subunits. Three heterotrimers associate to form the active enzyme.

It is found in the cytoplasm. The catalysed reaction is urea + 2 H2O + H(+) = hydrogencarbonate + 2 NH4(+). The protein operates within nitrogen metabolism; urea degradation; CO(2) and NH(3) from urea (urease route): step 1/1. This Streptomyces coelicolor (strain ATCC BAA-471 / A3(2) / M145) protein is Urease subunit gamma.